A 580-amino-acid chain; its full sequence is Probable inactive 1-aminocyclopropane-1-carboxylate synthase-like protein 2 (580 aa).

Residues 1–43 (MSENRNEGSSQAAKANSDTQTPSHFKVTHPRLRDQLKKKSSKK) form a disordered region. The segment covering 7-23 (EGSSQAAKANSDTQTPS) has biased composition (polar residues). K417 bears the N6-(pyridoxal phosphate)lysine mark.

It belongs to the class-I pyridoxal-phosphate-dependent aminotransferase family.

This Mus musculus (Mouse) protein is Probable inactive 1-aminocyclopropane-1-carboxylate synthase-like protein 2 (Accsl).